The following is an 87-amino-acid chain: Acyl-CoA-binding protein 2 (87 aa).

The 86-residue stretch at 2–87 (VSQLFEEKAK…VDNLIAKYSS (86 aa)) folds into the ACB domain. Residues 29–33 (YGLYK), Lys51, Lys55, and Tyr74 each bind an acyl-CoA.

The protein belongs to the ACBP family.

Its function is as follows. Binds medium- and long-chain acyl-CoA esters with very high affinity and may function as an intracellular carrier of acyl-CoA esters. In Saccharomyces pastorianus (strain ATCC 76670 / Carlsberg bottom yeast no.2 / CBS 1503 / CLIB 180 / NBRC 10610 / NRRL Y-1525) (Saaz-type lager yeast), this protein is Acyl-CoA-binding protein 2 (ACB2).